A 66-amino-acid polypeptide reads, in one-letter code: MKIDIPVKGMTCQHCVDKIEKFVGELEGVSYIGVDLDKQSVQVEFSAPASAEAIEEAILDAGYELG.

Residues 1–66 enclose the HMA domain; that stretch reads MKIDIPVKGM…AILDAGYELG (66 aa). The Cu cation site is built by C12 and C15.

Its function is as follows. Part of a cation-transporting system which is associated with copper export out of the H.pylori cells. This chain is COP-associated protein (copP), found in Helicobacter felis (strain ATCC 49179 / CCUG 28539 / NCTC 12436 / CS1).